The primary structure comprises 498 residues: ATP synthase subunit beta, chloroplastic (498 aa).

172-179 is an ATP binding site; the sequence is GGAGVGKT.

It belongs to the ATPase alpha/beta chains family. In terms of assembly, F-type ATPases have 2 components, CF(1) - the catalytic core - and CF(0) - the membrane proton channel. CF(1) has five subunits: alpha(3), beta(3), gamma(1), delta(1), epsilon(1). CF(0) has four main subunits: a(1), b(1), b'(1) and c(9-12).

It is found in the plastid. The protein localises to the chloroplast thylakoid membrane. It catalyses the reaction ATP + H2O + 4 H(+)(in) = ADP + phosphate + 5 H(+)(out). Its function is as follows. Produces ATP from ADP in the presence of a proton gradient across the membrane. The catalytic sites are hosted primarily by the beta subunits. The chain is ATP synthase subunit beta, chloroplastic from Gossypium barbadense (Sea Island cotton).